We begin with the raw amino-acid sequence, 523 residues long: 2-isopropylmalate synthase (523 aa).

A Pyruvate carboxyltransferase domain is found at 5–267 (VIIFDTTLRD…HTNINHHEIW (263 aa)). Mn(2+) is bound by residues D14, H202, H204, and N238. The segment at 392–523 (RLDYFSVQSG…QNKENNKETV (132 aa)) is regulatory domain.

The protein belongs to the alpha-IPM synthase/homocitrate synthase family. LeuA type 1 subfamily. As to quaternary structure, homodimer. Mn(2+) is required as a cofactor.

The protein localises to the cytoplasm. It carries out the reaction 3-methyl-2-oxobutanoate + acetyl-CoA + H2O = (2S)-2-isopropylmalate + CoA + H(+). It participates in amino-acid biosynthesis; L-leucine biosynthesis; L-leucine from 3-methyl-2-oxobutanoate: step 1/4. Functionally, catalyzes the condensation of the acetyl group of acetyl-CoA with 3-methyl-2-oxobutanoate (2-ketoisovalerate) to form 3-carboxy-3-hydroxy-4-methylpentanoate (2-isopropylmalate). The sequence is that of 2-isopropylmalate synthase from Salmonella agona (strain SL483).